The primary structure comprises 360 residues: Phospho-N-acetylmuramoyl-pentapeptide-transferase (360 aa).

The next 10 membrane-spanning stretches (helical) occupy residues 26–46 (AILGLLTALMFSLWWGPKLIE), 74–94 (MGGLMILGAIFISVLLWGDLG), 97–117 (YVWVMLFVLGSFGMIGFIDDY), 132–152 (WKYILQSLAALIIAFFLYTTA), 168–188 (VMPQLGAVFIVLAYFTIVGSS), 199–219 (GLAIMPTVMVAAAFALIAYLS), 236–256 (SGELVIVCTAIVGAGLGFLWF), 263–283 (VFMGDVGSLSLGAALGAIAVL), 288–308 (ILLVIMGGVFVMETVSVILQV), and 338–358 (VIVRFWIISIFLVLLGLATLK).

It belongs to the glycosyltransferase 4 family. MraY subfamily. Mg(2+) is required as a cofactor.

It is found in the cell inner membrane. The enzyme catalyses UDP-N-acetyl-alpha-D-muramoyl-L-alanyl-gamma-D-glutamyl-meso-2,6-diaminopimeloyl-D-alanyl-D-alanine + di-trans,octa-cis-undecaprenyl phosphate = di-trans,octa-cis-undecaprenyl diphospho-N-acetyl-alpha-D-muramoyl-L-alanyl-D-glutamyl-meso-2,6-diaminopimeloyl-D-alanyl-D-alanine + UMP. It participates in cell wall biogenesis; peptidoglycan biosynthesis. Its function is as follows. Catalyzes the initial step of the lipid cycle reactions in the biosynthesis of the cell wall peptidoglycan: transfers peptidoglycan precursor phospho-MurNAc-pentapeptide from UDP-MurNAc-pentapeptide onto the lipid carrier undecaprenyl phosphate, yielding undecaprenyl-pyrophosphoryl-MurNAc-pentapeptide, known as lipid I. The sequence is that of Phospho-N-acetylmuramoyl-pentapeptide-transferase from Shewanella sp. (strain ANA-3).